A 208-amino-acid polypeptide reads, in one-letter code: EF-hand protein 5 variant 2 (208 aa).

The segment at 1–35 (MQARGTVKVQGDANVDGKMSTGQHPHHQHLNSTQA) is disordered. EF-hand domains are found at residues 64-98 (MAEG…HLTE), 99-134 (EEFH…EVDD), 135-170 (TMAD…LAER), and 171-206 (STPE…SRVN). 5 residues coordinate Ca(2+): glutamate 118, aspartate 123, aspartate 148, threonine 152, and tyrosine 154.

The protein is EF-hand protein 5 variant 2 of Trypanosoma cruzi.